Consider the following 37-residue polypeptide: Cytochrome b6-f complex subunit 5 (37 aa).

A helical membrane pass occupies residues 5–25 (LLSGIVLGLVPVTITGLFVAA).

It belongs to the PetG family. As to quaternary structure, the 4 large subunits of the cytochrome b6-f complex are cytochrome b6, subunit IV (17 kDa polypeptide, PetD), cytochrome f and the Rieske protein, while the 4 small subunits are PetG, PetL, PetM and PetN. The complex functions as a dimer.

It localises to the plastid. The protein resides in the chloroplast thylakoid membrane. Component of the cytochrome b6-f complex, which mediates electron transfer between photosystem II (PSII) and photosystem I (PSI), cyclic electron flow around PSI, and state transitions. PetG is required for either the stability or assembly of the cytochrome b6-f complex. This chain is Cytochrome b6-f complex subunit 5, found in Emiliania huxleyi (Coccolithophore).